Consider the following 493-residue polypeptide: Galactose-1-phosphate uridylyltransferase (493 aa).

It belongs to the galactose-1-phosphate uridylyltransferase type 2 family.

It is found in the cytoplasm. It carries out the reaction alpha-D-galactose 1-phosphate + UDP-alpha-D-glucose = alpha-D-glucose 1-phosphate + UDP-alpha-D-galactose. It participates in carbohydrate metabolism; galactose metabolism. The sequence is that of Galactose-1-phosphate uridylyltransferase from Lactococcus lactis subsp. cremoris (strain SK11).